Reading from the N-terminus, the 210-residue chain is Somatotropin (210 aa).

The signal sequence occupies residues 1–22; that stretch reads MGQVFLLMPVLLVSCFLSQGAA. Residue His-38 participates in Zn(2+) binding. A disulfide bond links Cys-71 and Cys-183. Glu-192 contacts Zn(2+). Cysteines 200 and 208 form a disulfide.

It belongs to the somatotropin/prolactin family.

It localises to the secreted. Its function is as follows. Growth hormone plays an important role in growth control and is involved in the regulation of several anabolic processes. Implicated as an osmoregulatory substance important for seawater adaptation. The polypeptide is Somatotropin (gh) (Oncorhynchus keta (Chum salmon)).